The primary structure comprises 280 residues: Tryptophan 2,3-dioxygenase (280 aa).

Substrate contacts are provided by residues 47-51, Tyr109, and Arg113; that span reads FVVQH. Heme is bound at residue His236. Thr250 contributes to the substrate binding site.

Belongs to the tryptophan 2,3-dioxygenase family. In terms of assembly, homotetramer. It depends on heme as a cofactor.

The enzyme catalyses L-tryptophan + O2 = N-formyl-L-kynurenine. It functions in the pathway amino-acid degradation; L-tryptophan degradation via kynurenine pathway; L-kynurenine from L-tryptophan: step 1/2. Functionally, heme-dependent dioxygenase that catalyzes the oxidative cleavage of the L-tryptophan (L-Trp) pyrrole ring and converts L-tryptophan to N-formyl-L-kynurenine. Catalyzes the oxidative cleavage of the indole moiety. The polypeptide is Tryptophan 2,3-dioxygenase (Serratia proteamaculans (strain 568)).